A 549-amino-acid polypeptide reads, in one-letter code: Glucose-6-phosphate isomerase (549 aa).

The active-site Proton donor is E355. Active-site residues include H386 and K514.

The protein belongs to the GPI family.

The protein localises to the cytoplasm. The catalysed reaction is alpha-D-glucose 6-phosphate = beta-D-fructose 6-phosphate. Its pathway is carbohydrate biosynthesis; gluconeogenesis. It participates in carbohydrate degradation; glycolysis; D-glyceraldehyde 3-phosphate and glycerone phosphate from D-glucose: step 2/4. Catalyzes the reversible isomerization of glucose-6-phosphate to fructose-6-phosphate. The protein is Glucose-6-phosphate isomerase of Salmonella typhi.